A 196-amino-acid chain; its full sequence is Signal peptidase complex catalytic subunit SEC11 (196 aa).

Topologically, residues 1-14 (MLSSLSPYMANPRQ) are cytoplasmic. A helical; Signal-anchor for type II membrane protein membrane pass occupies residues 15–33 (TFTQVLNFALVLSTAFMLW). The Lumenal portion of the chain corresponds to 34 to 196 (KGLSVYTNSA…MGLMVILQRE (163 aa)). Residues Ser-53 and His-92 each act as charge relay system in the active site. The interval 101–133 (VPGKDKTKKGGKQGVEASPSSLESQKLLTKGDN) is disordered. Residues 118–133 (SPSSLESQKLLTKGDN) are compositionally biased toward polar residues. Asn-134 carries N-linked (GlcNAc...) asparagine glycosylation. The active-site Charge relay system is Asp-138. The segment at 182 to 193 (VLLGFMGLMVIL) is C-terminal short (CTS) helix.

The protein belongs to the peptidase S26B family. As to quaternary structure, component of the signal peptidase complex (SPC) composed of a catalytic subunit SEC11 and three accessory subunits SPC1, SPC2 and SPC3. The complex induces a local thinning of the ER membrane which is used to measure the length of the signal peptide (SP) h-region of protein substrates. This ensures the selectivity of the complex towards h-regions shorter than 18-20 amino acids. SPC associates with the translocon complex.

Its subcellular location is the endoplasmic reticulum membrane. The enzyme catalyses Cleavage of hydrophobic, N-terminal signal or leader sequences from secreted and periplasmic proteins.. Functionally, catalytic component of the signal peptidase complex (SPC) which catalyzes the cleavage of N-terminal signal sequences from nascent proteins as they are translocated into the lumen of the endoplasmic reticulum. Specifically cleaves N-terminal signal peptides that contain a hydrophobic alpha-helix (h-region) shorter than 18-20 amino acids. The chain is Signal peptidase complex catalytic subunit SEC11 (SEC11) from Ajellomyces dermatitidis (strain ER-3 / ATCC MYA-2586) (Blastomyces dermatitidis).